Consider the following 534-residue polypeptide: O-phosphoserine--tRNA(Cys) ligase (534 aa).

Substrate is bound by residues 186-188, 231-233, 273-274, and N325; these read HMT, SAS, and YY.

The protein belongs to the class-II aminoacyl-tRNA synthetase family. O-phosphoseryl-tRNA(Cys) synthetase subfamily. In terms of assembly, homotetramer. Interacts with SepCysS.

The catalysed reaction is tRNA(Cys) + O-phospho-L-serine + ATP = O-phospho-L-seryl-tRNA(Cys) + AMP + diphosphate. In terms of biological role, catalyzes the attachment of O-phosphoserine (Sep) to tRNA(Cys). This Archaeoglobus fulgidus (strain ATCC 49558 / DSM 4304 / JCM 9628 / NBRC 100126 / VC-16) protein is O-phosphoserine--tRNA(Cys) ligase (sepS).